A 495-amino-acid polypeptide reads, in one-letter code: UPF0371 protein cgR_2887 (495 aa).

This sequence belongs to the UPF0371 family.

The protein is UPF0371 protein cgR_2887 of Corynebacterium glutamicum (strain R).